A 50-amino-acid polypeptide reads, in one-letter code: Defensin-like protein 1 (50 aa).

Cystine bridges form between cysteine 3–cysteine 50, cysteine 14–cysteine 35, cysteine 20–cysteine 44, and cysteine 24–cysteine 46.

This sequence belongs to the DEFL family.

The protein resides in the secreted. Functionally, possesses antimicrobial activity sensitive to inorganic cations. Has no inhibitory effect on insect gut alpha-amylase. Induces potential changes in fungal membranes and increased K+ efflux and Ca(2+) uptake. Interacts with sphingolipids and ergosterols found in fungal plasma membranes. This chain is Defensin-like protein 1, found in Dahlia merckii (Bedding dahlia).